Consider the following 146-residue polypeptide: 3-hydroxyacyl-[acyl-carrier-protein] dehydratase FabZ (146 aa).

His-49 is an active-site residue.

The protein belongs to the thioester dehydratase family. FabZ subfamily.

The protein resides in the cytoplasm. The enzyme catalyses a (3R)-hydroxyacyl-[ACP] = a (2E)-enoyl-[ACP] + H2O. In terms of biological role, involved in unsaturated fatty acids biosynthesis. Catalyzes the dehydration of short chain beta-hydroxyacyl-ACPs and long chain saturated and unsaturated beta-hydroxyacyl-ACPs. This chain is 3-hydroxyacyl-[acyl-carrier-protein] dehydratase FabZ, found in Pseudomonas savastanoi pv. phaseolicola (strain 1448A / Race 6) (Pseudomonas syringae pv. phaseolicola (strain 1448A / Race 6)).